The sequence spans 219 residues: Intraflagellar transport protein 22 (219 aa).

GTP-binding positions include 12–19 and 72–79; these read GPSKSGKS and WDVGGSSK.

It belongs to the small GTPase superfamily. Rab family.

It localises to the cytoplasm. The protein resides in the cytoskeleton. It is found in the flagellum basal body. Its subcellular location is the cell projection. The protein localises to the cilium. It localises to the flagellum. Its function is as follows. Required for flagellum formation. The protein is Intraflagellar transport protein 22 (IFT22) of Trypanosoma brucei brucei (strain 927/4 GUTat10.1).